The following is a 101-amino-acid chain: MAKVSMKNREQKREKLVAKYAAKRAELKAIIKNPNTSDDDRWDAQMKLQQLPRDSSPSRLRNRCQVTGRPHGVLRKFELSRIKLREYGMRGDVPGLTKASW.

The protein belongs to the universal ribosomal protein uS14 family. Part of the 30S ribosomal subunit. Contacts proteins S3 and S10.

Its function is as follows. Binds 16S rRNA, required for the assembly of 30S particles and may also be responsible for determining the conformation of the 16S rRNA at the A site. The chain is Small ribosomal subunit protein uS14 from Marinobacter nauticus (strain ATCC 700491 / DSM 11845 / VT8) (Marinobacter aquaeolei).